The sequence spans 506 residues: Dipeptide and tripeptide permease A (506 aa).

Over 1–36 (MSTANNNSESTESVSMNAFKQPKAFYLIFSIELWER) the chain is Cytoplasmic. The chain crosses the membrane as a helical span at residues 37–57 (FGYYGLQGIMAVYLVKMLGMS). The Periplasmic segment spans residues 58–61 (ETDS). Residues 62-82 (ITLFSSFSALVYGFVAIGGWL) traverse the membrane as a helical segment. Residues 83–91 (GDKVLGTKR) lie on the Cytoplasmic side of the membrane. A run of 2 helical transmembrane segments spans residues 92-112 (VIVL…YSGH) and 113-133 (SVAW…LFKA). Residues 134–155 (NPSALLSTCYAKDDPRLDGAFT) lie on the Cytoplasmic side of the membrane. A helical transmembrane segment spans residues 156–176 (MYYMAVNIGSFFSMLATPVLA). The Periplasmic segment spans residues 177–180 (ANYG). A helical membrane pass occupies residues 181–201 (WSVAFSLSVVGMILTLVNFMF). Residues 202 to 222 (CRKWVSTQGSQPDFQPINLKK) are Cytoplasmic-facing. A helical transmembrane segment spans residues 223-243 (LVITLAGIVVLVALSTWLLHN). Residues 244–248 (QGVAR) lie on the Periplasmic side of the membrane. The helical transmembrane segment at 249 to 269 (WILTIISLAVVAIFIKEMLAV) threads the bilayer. The Cytoplasmic portion of the chain corresponds to 270-276 (SGAERRK). A helical transmembrane segment spans residues 277–297 (MIVALLLMLEAVVFFVLYNQM). Topologically, residues 298–322 (PTSLNFFAIRNVEHSILGFAFEPEQ) are periplasmic. A helical transmembrane segment spans residues 323–343 (YQALNPFWIMVASPLLAAVYN). Residues 344-354 (KMGDQLPMAHK) lie on the Cytoplasmic side of the membrane. The helical transmembrane segment at 355–375 (FAIGMVLCSGAFLVLPWGASM) threads the bilayer. Topologically, residues 376–385 (ANEQGIVSVN) are periplasmic. A helical membrane pass occupies residues 386 to 406 (WLILCYGLQSIGELMISGLGL). The Cytoplasmic segment spans residues 407-416 (AMVAQLVPQR). A helical membrane pass occupies residues 417–437 (LMGFIMGAWFLTSAGAAIIAG). At 438 to 461 (YVANMMAVPENVVDPHVSLEVYSN) the chain is on the periplasmic side. The helical transmembrane segment at 462-482 (VFMQIGIVTGIIAVLMMLTAP) threads the bilayer. Over 483–506 (KLTRMTQDVATDVPADAATTTASA) the chain is Cytoplasmic.

It belongs to the major facilitator superfamily. Proton-dependent oligopeptide transporter (POT/PTR) (TC 2.A.17) family. DtpA subfamily.

It localises to the cell inner membrane. Proton-dependent permease that transports di- and tripeptides. The sequence is that of Dipeptide and tripeptide permease A from Pectobacterium carotovorum subsp. carotovorum (strain PC1).